Reading from the N-terminus, the 1403-residue chain is Eukaryotic translation initiation factor 4 gamma (1403 aa).

3 stretches are compositionally biased toward polar residues: residues 1-11 (MSSKPPSNTPK), 19-39 (ASSQ…TATA), and 50-60 (EPTNTSRANAQ). Disordered stretches follow at residues 1–381 (MSSK…GSTP), 439–464 (SRSG…RNGF), 488–774 (VVVP…KRDL), and 861–1003 (AFSD…EALL). The residue at position 83 (Ser-83) is a Phosphoserine. Positions 109-137 (DNTSKPSANSSAERTSSQHQKPETSSQIG) are enriched in polar residues. 2 stretches are compositionally biased toward low complexity: residues 190-208 (SGVS…SVTS) and 231-248 (PRPT…ANGA). Positions 249 to 269 (PTNKPSTDINTTDPATQTTQV) are enriched in polar residues. Residues 270 to 291 (SASNSPALSGSSTPSNTSSRSN) show a composition bias toward low complexity. Basic and acidic residues predominate over residues 298–308 (FSEKRHYDRYG). The segment covering 325–334 (NYNNSGNNRN) has biased composition (low complexity). Composition is skewed to polar residues over residues 346–381 (RNYN…GSTP), 439–460 (SRSG…TLSP), and 493–508 (KNAS…SRAE). 4 positions are modified to phosphoserine: Ser-452, Ser-455, Ser-456, and Ser-459. Over residues 537-714 (IQEKAEAEAK…GKREADKNPE (178 aa)) the composition is skewed to basic and acidic residues. Residues 720–737 (PLASSEANVDTSKQTNAT) are compositionally biased toward polar residues. A compositionally biased stretch (basic and acidic residues) spans 741-754 (VVDKTKVEKLKASE). Positions 757–768 (STSSLSSPSHST) are enriched in low complexity. Ser-866 and Ser-882 each carry phosphoserine. Residues 868–886 (RGMYSSSRQSSRSGSNTHS) are compositionally biased toward low complexity. At Thr-884 the chain carries Phosphothreonine. Phosphoserine is present on residues Ser-886, Ser-911, Ser-919, and Ser-921. At Tyr-923 the chain carries Phosphotyrosine. Residues 986–995 (KLTEKPAETK) show a composition bias toward basic and acidic residues. Residues 1009-1245 (QRKVKGSLNK…MDVMDSRKNG (237 aa)) enclose the MIF4G domain. Residues 1266-1403 (AERKKALAES…QKDSNSKTSS (138 aa)) are disordered. Positions 1284–1295 (HGRDMNRGDSRM) are enriched in basic and acidic residues. 3 stretches are compositionally biased toward polar residues: residues 1302–1313 (PPFSSSDWSNNK), 1328–1341 (SGTQ…SLSS), and 1348–1358 (VSRTPSRQNSA). The residue at position 1333 (Ser-1333) is a Phosphoserine. Residues 1383–1403 (LEEHDHDNDGGQKDSNSKTSS) show a composition bias toward basic and acidic residues.

Belongs to the eukaryotic initiation factor 4G family.

It localises to the cytoplasm. The protein resides in the perinuclear region. Component of the protein complex eIF4F, which is involved in the recognition of the mRNA cap, ATP-dependent unwinding of 5'-terminal secondary structure and recruitment of mRNA to the ribosome. This is Eukaryotic translation initiation factor 4 gamma (tif471) from Schizosaccharomyces pombe (strain 972 / ATCC 24843) (Fission yeast).